Consider the following 202-residue polypeptide: 3-isopropylmalate dehydratase small subunit (202 aa).

It belongs to the LeuD family. LeuD type 1 subfamily. Heterodimer of LeuC and LeuD.

The catalysed reaction is (2R,3S)-3-isopropylmalate = (2S)-2-isopropylmalate. Its pathway is amino-acid biosynthesis; L-leucine biosynthesis; L-leucine from 3-methyl-2-oxobutanoate: step 2/4. In terms of biological role, catalyzes the isomerization between 2-isopropylmalate and 3-isopropylmalate, via the formation of 2-isopropylmaleate. The polypeptide is 3-isopropylmalate dehydratase small subunit (Rhizobium etli (strain CIAT 652)).